The chain runs to 185 residues: Elongation factor P (185 aa).

It belongs to the elongation factor P family.

Its subcellular location is the cytoplasm. The protein operates within protein biosynthesis; polypeptide chain elongation. Functionally, involved in peptide bond synthesis. Stimulates efficient translation and peptide-bond synthesis on native or reconstituted 70S ribosomes in vitro. Probably functions indirectly by altering the affinity of the ribosome for aminoacyl-tRNA, thus increasing their reactivity as acceptors for peptidyl transferase. The sequence is that of Elongation factor P from Lysinibacillus sphaericus (strain C3-41).